We begin with the raw amino-acid sequence, 71 residues long: uncharacterized protein (71 aa).

Belongs to the ycf40 family.

The protein localises to the plastid. The protein resides in the chloroplast. This is an uncharacterized protein from Pyropia yezoensis (Susabi-nori).